The primary structure comprises 470 residues: Heparan-sulfate 6-O-sulfotransferase 3 (470 aa).

Over 1 to 4 (MDER) the chain is Cytoplasmic. The chain crosses the membrane as a helical; Signal-anchor for type II membrane protein span at residues 5–27 (FNKWLLTPVLTLLFVVIMYQYVS). Residues 28–470 (PSCTSSCTNF…EDYNSQVVRW (443 aa)) lie on the Lumenal side of the membrane. The disordered stretch occupies residues 36–121 (NFGEQLRSGE…EAPENGSLPR (86 aa)). Residues 88 to 113 (PEDEDEDPGDPEEEEEEEEEEPDPEA) are compositionally biased toward acidic residues. Residues N116 and N127 are each glycosylated (N-linked (GlcNAc...) asparagine). 3'-phosphoadenylyl sulfate is bound at residue 151-159 (HIQKTGGTT). Substrate-binding positions include 181 to 182 (KK), R198, W203, and H208. H208 functions as the Proton acceptor in the catalytic mechanism. Residue N230 is glycosylated (N-linked (GlcNAc...) asparagine). Positions 244 and 252 each coordinate 3'-phosphoadenylyl sulfate. H256 and W263 together coordinate substrate. Residues N323 and N328 are each glycosylated (N-linked (GlcNAc...) asparagine). 3'-phosphoadenylyl sulfate is bound at residue 376-378 (TQF). N-linked (GlcNAc...) asparagine glycosylation occurs at N379. Residue 382 to 383 (RA) coordinates 3'-phosphoadenylyl sulfate. The tract at residues 421-453 (TKQLEHQRDRQKRREERRLQREHRAHRWPKEDR) is disordered. Residues 422 to 439 (KQLEHQRDRQKRREERRL) show a composition bias toward basic and acidic residues.

It belongs to the sulfotransferase 6 family. Ubiquitously expressed.

It localises to the membrane. The enzyme catalyses alpha-D-glucosaminyl-[heparan sulfate](n) + 3'-phosphoadenylyl sulfate = 6-sulfo-alpha-D-glucosaminyl-[heparan sulfate](n) + adenosine 3',5'-bisphosphate + H(+). In terms of biological role, 6-O-sulfation enzyme which catalyzes the transfer of sulfate from 3'-phosphoadenosine 5'-phosphosulfate (PAPS) to position 6 of the N-sulfoglucosamine residue (GlcNS) of heparan sulfate. In Mus musculus (Mouse), this protein is Heparan-sulfate 6-O-sulfotransferase 3 (Hs6st3).